The following is a 69-amino-acid chain: Pancreatic propolypeptide YG (69 aa).

This sequence belongs to the NPY family.

It is found in the secreted. This Lophius americanus (American angler) protein is Pancreatic propolypeptide YG.